Reading from the N-terminus, the 225-residue chain is Transmembrane protein C16orf54 homolog (225 aa).

A helical membrane pass occupies residues 34 to 54 (IPIMLGLASLTAFFIITTAVL). A disordered region spans residues 107–149 (RAPDPPTPGGTLEGRATAPPAIPTPHPSPSSLVPQTPPEVPAQ). A phosphothreonine mark is found at Thr-113 and Thr-117. Ser-195 is modified (phosphoserine).

The protein resides in the membrane. The sequence is that of Transmembrane protein C16orf54 homolog from Rattus norvegicus (Rat).